A 636-amino-acid chain; its full sequence is ABC transporter ATP-binding protein RamA (636 aa).

5 helical membrane passes run 45 to 65 (VLVL…PLAL), 78 to 98 (AGWW…LDSA), 175 to 195 (LVDV…ALLL), 269 to 289 (GVLV…RLAA), and 297 to 317 (LLAV…ASLL). The region spanning 45 to 322 (VLVLLCSVAA…AASLLGAIVR (278 aa)) is the ABC transmembrane type-1 domain. The ABC transporter domain maps to 354 to 585 (LRLCGVRVLR…AGYREVFGAG (232 aa)). 386–393 (GRSGAGKS) contacts ATP. Residues 589–606 (GAGAGAGAGADAGAGADA) are compositionally biased toward gly residues. The interval 589–636 (GAGAGAGAGADAGAGADAGPGPDSGAATAVGGSGPGPVRRPEPEEARP) is disordered. Residues 607-618 (GPGPDSGAATAV) show a composition bias toward low complexity. A compositionally biased stretch (basic and acidic residues) spans 627–636 (RRPEPEEARP).

It belongs to the ABC transporter superfamily.

It localises to the cell membrane. Functionally, probably involved in exporting SapB from the cell. Expression of the ram locus (ramA, ramB and ramR) induces rapid aerial mycelium formation in S.lividans. The polypeptide is ABC transporter ATP-binding protein RamA (Streptomyces coelicolor (strain ATCC BAA-471 / A3(2) / M145)).